The chain runs to 133 residues: UPF0768 protein C977.18 (133 aa).

This sequence belongs to the UPF0768 family.

The chain is UPF0768 protein C977.18 from Schizosaccharomyces pombe (strain 972 / ATCC 24843) (Fission yeast).